The following is a 530-amino-acid chain: UDP-glucuronosyltransferase 2B15 (530 aa).

The signal sequence occupies residues 1 to 23 (MSGKWISALLLLQISFCFKSGNC). An N-linked (GlcNAc...) asparagine glycan is attached at Asn316. The chain crosses the membrane as a helical span at residues 494–510 (VIGFLLSCVAVTVVLAL).

It belongs to the UDP-glycosyltransferase family. Post-translationally, N-glycosylated. In terms of tissue distribution, liver. Lower levels seen in the kidney and testis.

It is found in the endoplasmic reticulum membrane. It carries out the reaction glucuronate acceptor + UDP-alpha-D-glucuronate = acceptor beta-D-glucuronoside + UDP + H(+). The catalysed reaction is 17alpha-estradiol + UDP-alpha-D-glucuronate = 17alpha-estradiol 3-O-(beta-D-glucuronate) + UDP + H(+). The enzyme catalyses 16alpha,17alpha-estriol + UDP-alpha-D-glucuronate = 16alpha,17alpha-estriol 3-O-(beta-D-glucuronate) + UDP + H(+). It catalyses the reaction 17beta-hydroxy-5alpha-androstan-3-one + UDP-alpha-D-glucuronate = 5alpha-dihydrotestosterone 17-O-(beta-D-glucuronate) + UDP + H(+). Its function is as follows. UDP-glucuronosyltransferase (UGT) that catalyzes phase II biotransformation reactions in which lipophilic substrates are conjugated with glucuronic acid to increase the metabolite's water solubility, thereby facilitating excretion into either the urine or bile. Essential for the elimination and detoxification of drugs, xenobiotics and endogenous compounds. Catalyzes the glucuronidation of endogenous steroid hormones such as androgens (testosterone, androsterone) and estrogens (estradiol, epiestradiol, estriol, catechol estrogens). Displays glucuronidation activity toward several classes of xenoblotic substrates, including phenolic compounds (eugenol, 4-nitrophenol, 4-hydroxybiphenyl) and phenylpropanoids (naringenin, coumarins). Catalyzes the glucuronidation of monoterpenoid alcohols such as borneol, menthol and isomenthol, a class of natural compounds used in essential oils. In Rattus norvegicus (Rat), this protein is UDP-glucuronosyltransferase 2B15.